The following is a 741-amino-acid chain: Aspartyl/asparaginyl beta-hydroxylase (741 aa).

The segment at 1–54 (MAPRKNAKGGGGNSSSSGSGSGSGSGSPSTGSSGSSSSPGARREAKHGGHKNGR) is disordered. The Cytoplasmic segment spans residues 1-62 (MAPRKNAKGG…GRRGGISGGS (62 aa)). Over residues 8–25 (KGGGGNSSSSGSGSGSGS) the composition is skewed to gly residues. Position 15 is a phosphoserine (Ser15). Low complexity predominate over residues 26-40 (GSPSTGSSGSSSSPG). A helical; Signal-anchor for type II membrane protein transmembrane segment spans residues 63–83 (FFTWFMVIALLGVWTSVAVVW). Topologically, residues 84–741 (FDLVDYEEVL…PQQRRSLPAI (658 aa)) are lumenal. Ca(2+)-binding residues include Asp100, Asp102, Asp104, Asp106, and Asp111. Disordered stretches follow at residues 120–141 (ERSP…AELE) and 222–244 (TASQ…SDPS). The span at 231-242 (MEEMTNEQENSD) shows a compositional bias: acidic residues. TPR repeat units lie at residues 324-357 (IKAE…YPQS), 365-398 (AQCE…PDAP), 437-470 (TTLK…TPND), 472-504 (FAKV…GDPG), and 508-540 (GRFY…GHFA). Residue Asn453 is glycosylated (N-linked (GlcNAc...) asparagine). Residue Trp608 participates in 2-oxoglutarate binding. The cysteines at positions 624 and 631 are disulfide-linked. Residue Ser651 participates in 2-oxoglutarate binding. His662 provides a ligand contact to Fe cation. 671–673 (RMH) contacts 2-oxoglutarate. Residue Asn689 is glycosylated (N-linked (GlcNAc...) asparagine). His708 serves as a coordination point for Fe cation. Arg718 serves as a coordination point for 2-oxoglutarate.

Belongs to the aspartyl/asparaginyl beta-hydroxylase family. Monomer. Isoform 2 interacts with CASQ2. Requires Fe cation as cofactor. In terms of tissue distribution, isoform 1 is detected in heart, liver and ovary (at protein level). Detected in heart ventricle. Isoform 1 is widely expressed. Isoform 2 is detected in heart and skeletal muscle.

The protein localises to the endoplasmic reticulum membrane. Its subcellular location is the sarcoplasmic reticulum membrane. The catalysed reaction is L-aspartyl-[protein] + 2-oxoglutarate + O2 = 3-hydroxy-L-aspartyl-[protein] + succinate + CO2. Specifically hydroxylates an Asp or Asn residue in certain epidermal growth factor-like (EGF) domains of a number of proteins. The sequence is that of Aspartyl/asparaginyl beta-hydroxylase (Asph) from Mus musculus (Mouse).